A 147-amino-acid chain; its full sequence is UPF0178 protein VP2328 (147 aa).

It belongs to the UPF0178 family.

This is UPF0178 protein VP2328 from Vibrio parahaemolyticus serotype O3:K6 (strain RIMD 2210633).